Consider the following 117-residue polypeptide: Small nuclear ribonucleoprotein Sm D1 (117 aa).

One can recognise a Sm domain in the interval 2–74 (KLVRFLMKLT…IRYYILPDSL (73 aa)). Positions 81–117 (IDDSTKPKQKKKEVVRGRGRGRGRGTRGRGRGASRGF) are disordered. A compositionally biased stretch (basic residues) spans 87-117 (PKQKKKEVVRGRGRGRGRGTRGRGRGASRGF).

This sequence belongs to the snRNP core protein family. In terms of assembly, belongs to the 40S cdc5-associated complex (or cwf complex), a spliceosome sub-complex reminiscent of a late-stage spliceosome composed of the U2, U5 and U6 snRNAs and at least brr2, cdc5, cwf2/prp3, cwf3/syf1, cwf4/syf3, cwf5/ecm2, spp42/cwf6, cwf7/spf27, cwf8, cwf9, cwf10, cwf11, cwf12, prp45/cwf13, cwf14, cwf15, cwf16, cwf17, cwf18, cwf19, cwf20, cwf21, cwf22, cwf23, cwf24, cwf25, cwf26, cyp7/cwf27, cwf28, cwf29/ist3, lea1, msl1, prp5/cwf1, prp10, prp12/sap130, prp17, prp22, sap61, sap62, sap114, sap145, slu7, smb1, smd1, smd3, smf1, smg1 and syf2. Interacts with saf5; the interaction is direct.

Its subcellular location is the nucleus. The protein localises to the cytoplasm. Functionally, plays a role in pre-mRNA splicing as a core component of the spliceosomal U1, U2, U4 and U5 small nuclear ribonucleoproteins (snRNPs), the building blocks of the spliceosome. The polypeptide is Small nuclear ribonucleoprotein Sm D1 (smd1) (Schizosaccharomyces pombe (strain 972 / ATCC 24843) (Fission yeast)).